The following is a 74-amino-acid chain: ATP synthase subunit 9, mitochondrial (74 aa).

2 helical membrane-spanning segments follow: residues 8–28 and 50–70; these read IGAGLATIGVSGAGVGIGLIF and ILGFALTEATGLFCLMLAFLI.

Belongs to the ATPase C chain family. As to quaternary structure, F-type ATPases have 2 components, CF(1) - the catalytic core - and CF(0) - the membrane proton channel. CF(1) has five subunits: alpha(3), beta(3), gamma(1), delta(1), epsilon(1). CF(0) has three main subunits: a, b and c.

It is found in the mitochondrion membrane. Mitochondrial membrane ATP synthase (F(1)F(0) ATP synthase or Complex V) produces ATP from ADP in the presence of a proton gradient across the membrane which is generated by electron transport complexes of the respiratory chain. F-type ATPases consist of two structural domains, F(1) - containing the extramembraneous catalytic core and F(0) - containing the membrane proton channel, linked together by a central stalk and a peripheral stalk. During catalysis, ATP synthesis in the catalytic domain of F(1) is coupled via a rotary mechanism of the central stalk subunits to proton translocation. Part of the complex F(0) domain. A homomeric c-ring of probably 10 subunits is part of the complex rotary element. The chain is ATP synthase subunit 9, mitochondrial (atp9) from Schizosaccharomyces pombe (strain 972 / ATCC 24843) (Fission yeast).